A 160-amino-acid chain; its full sequence is Glyoxalase domain-containing protein 5 (160 aa).

The VOC domain occupies 37 to 157; that stretch reads RLDHIVMTVK…DRNLIEVSNY (121 aa).

Belongs to the glyoxalase I family.

In Homo sapiens (Human), this protein is Glyoxalase domain-containing protein 5 (GLOD5).